The following is a 312-amino-acid chain: Olfactory receptor 6X1 (312 aa).

The Extracellular segment spans residues 1-23; that stretch reads MRNGTVITEFILLGFPVIQGLQT. The N-linked (GlcNAc...) asparagine glycan is linked to Asn3. Residues 24-44 form a helical membrane-spanning segment; it reads PLFIAIFLTYILTLAGNGLII. Over 45 to 52 the chain is Cytoplasmic; the sequence is ATVWAEPR. Residues 53–73 form a helical membrane-spanning segment; that stretch reads LQIPMYFFLCNLSFLEIWYTT. Over 74 to 97 the chain is Extracellular; that stretch reads TVIPKLLGTFVVARTVICMSCCLL. The cysteines at positions 95 and 187 are disulfide-linked. Residues 98-118 form a helical membrane-spanning segment; the sequence is QAFFHFFVGTTEFLILTIMSF. Topologically, residues 119–137 are cytoplasmic; sequence DRYLTICNPLHHPTIMTSK. Residues 138–158 form a helical membrane-spanning segment; sequence LCLQLALSSWVVGFTIVFCQT. Over 159–195 the chain is Extracellular; the sequence is MLLIQLPFCGNNVISHFYCDVGPSLKAACIDTSILEL. A helical transmembrane segment spans residues 196-215; that stretch reads LGVIATILVIPGSLLFNMIS. At 216–235 the chain is on the cytoplasmic side; the sequence is YIYILSAILRIPSATGHQKT. The helical transmembrane segment at 236–256 threads the bilayer; that stretch reads FSTCASHLTVVSLLYGAVLFM. Residues 257-269 lie on the Extracellular side of the membrane; sequence YLRPTAHSSFKIN. The chain crosses the membrane as a helical span at residues 270–290; sequence KVVSVLNTILTPLLNPFIYTI. The Cytoplasmic segment spans residues 291-312; that stretch reads RNKEVKGALRKAMTCPKTGHAK.

The protein belongs to the G-protein coupled receptor 1 family.

It localises to the cell membrane. Functionally, odorant receptor. The chain is Olfactory receptor 6X1 (OR6X1) from Homo sapiens (Human).